The chain runs to 640 residues: Threonine--tRNA ligase (640 aa).

A TGS domain is found at Met1–Thr61. A catalytic region spans residues Asp243–Pro536. Zn(2+) contacts are provided by Cys336, His387, and His513.

Belongs to the class-II aminoacyl-tRNA synthetase family. As to quaternary structure, homodimer. Zn(2+) is required as a cofactor.

Its subcellular location is the cytoplasm. It carries out the reaction tRNA(Thr) + L-threonine + ATP = L-threonyl-tRNA(Thr) + AMP + diphosphate + H(+). Its function is as follows. Catalyzes the attachment of threonine to tRNA(Thr) in a two-step reaction: L-threonine is first activated by ATP to form Thr-AMP and then transferred to the acceptor end of tRNA(Thr). Also edits incorrectly charged L-seryl-tRNA(Thr). The protein is Threonine--tRNA ligase of Acidiphilium cryptum (strain JF-5).